Consider the following 265-residue polypeptide: Thiazole synthase (265 aa).

K103 acts as the Schiff-base intermediate with DXP in catalysis. 1-deoxy-D-xylulose 5-phosphate contacts are provided by residues G164, A190–G191, and N212–T213.

The protein belongs to the ThiG family. Homotetramer. Forms heterodimers with either ThiH or ThiS.

It is found in the cytoplasm. The catalysed reaction is [ThiS sulfur-carrier protein]-C-terminal-Gly-aminoethanethioate + 2-iminoacetate + 1-deoxy-D-xylulose 5-phosphate = [ThiS sulfur-carrier protein]-C-terminal Gly-Gly + 2-[(2R,5Z)-2-carboxy-4-methylthiazol-5(2H)-ylidene]ethyl phosphate + 2 H2O + H(+). The protein operates within cofactor biosynthesis; thiamine diphosphate biosynthesis. In terms of biological role, catalyzes the rearrangement of 1-deoxy-D-xylulose 5-phosphate (DXP) to produce the thiazole phosphate moiety of thiamine. Sulfur is provided by the thiocarboxylate moiety of the carrier protein ThiS. In vitro, sulfur can be provided by H(2)S. This chain is Thiazole synthase, found in Bordetella avium (strain 197N).